The sequence spans 964 residues: SKI family transcriptional corepressor 1 (964 aa).

Disordered stretches follow at residues 45 to 72 (TQLGPGREGSSSPNSKQELQPYSGSSAL), 278 to 365 (RTFS…GGSA), 414 to 452 (AGEPKGGPGTGSGGGAGTAAGAGGPGAGHLPPGAGPGPG), 525 to 587 (AGGG…RKSS), 610 to 766 (REAY…GPAA), and 793 to 842 (YLCT…EDGL). Over residues 283 to 310 (QGGGGGGANSGSGGAGKGGAGGGGGPGC) the composition is skewed to gly residues. The segment covering 345-355 (ALGLAAAANGP) has biased composition (low complexity). Gly residues-rich tracts occupy residues 356–365 (AGPGGPGGSA) and 417–440 (PKGGPGTGSGGGAGTAAGAGGPGA). Positions 571–583 (SLAPLAPPPPPPA) are enriched in pro residues. Positions 652-661 (DTADEPEVDV) are enriched in acidic residues. Basic and acidic residues predominate over residues 798-808 (ETHEPDKEDNH). Residues 823-834 (DQRSVSQPSPAN) are compositionally biased toward polar residues. A coiled-coil region spans residues 857–921 (ENLAREELQK…DTLCNELDQE (65 aa)).

Belongs to the SKI family. Interacts with LBX1. Interacts with SMAD1, SMAD2 and SMAD3.

It localises to the nucleus. Functionally, inhibits BMP signaling. Acts as a transcriptional corepressor of LBX1. The chain is SKI family transcriptional corepressor 1 (Skor1) from Rattus norvegicus (Rat).